Here is a 282-residue protein sequence, read N- to C-terminus: sn-glycerol-3-phosphate transport system permease protein UgpE (282 aa).

6 helical membrane passes run 14–34, 86–106, 112–132, 136–156, 201–221, and 248–268; these read LMLI…FVAS, IAIA…IVFF, MAFF…RILP, VIVD…LMAS, IAAL…WPLL, and WNYV…VVVL. An ABC transmembrane type-1 domain is found at 78 to 269; it reads LFNTFVVAIA…IPPVAVVVLM (192 aa).

Belongs to the binding-protein-dependent transport system permease family. As to quaternary structure, the complex is composed of two ATP-binding proteins (UgpC), two transmembrane proteins (UgpA and UgpE) and a solute-binding protein (UgpB).

The protein resides in the cell inner membrane. Functionally, part of the ABC transporter complex UgpBAEC involved in sn-glycerol-3-phosphate (G3P) import. Probably responsible for the translocation of the substrate across the membrane. The protein is sn-glycerol-3-phosphate transport system permease protein UgpE (ugpE) of Rhizobium meliloti (strain 1021) (Ensifer meliloti).